The primary structure comprises 189 residues: GTP cyclohydrolase 1 (189 aa).

3 residues coordinate Zn(2+): cysteine 80, histidine 83, and cysteine 152.

This sequence belongs to the GTP cyclohydrolase I family. In terms of assembly, toroid-shaped homodecamer, composed of two pentamers of five dimers.

The enzyme catalyses GTP + H2O = 7,8-dihydroneopterin 3'-triphosphate + formate + H(+). It participates in cofactor biosynthesis; 7,8-dihydroneopterin triphosphate biosynthesis; 7,8-dihydroneopterin triphosphate from GTP: step 1/1. The sequence is that of GTP cyclohydrolase 1 from Latilactobacillus sakei subsp. sakei (strain 23K) (Lactobacillus sakei subsp. sakei).